Here is a 212-residue protein sequence, read N- to C-terminus: Large ribosomal subunit protein uL1 (212 aa).

Belongs to the universal ribosomal protein uL1 family. Part of the 50S ribosomal subunit.

Functionally, binds directly to 23S rRNA. Probably involved in E site tRNA release. In terms of biological role, protein L1 is also a translational repressor protein, it controls the translation of its operon by binding to its mRNA. This is Large ribosomal subunit protein uL1 from Haloquadratum walsbyi (strain DSM 16790 / HBSQ001).